We begin with the raw amino-acid sequence, 623 residues long: Putative disease resistance protein At5g47280 (623 aa).

NB-ARC domains are found at residues 2–51 and 119–249; these read LFNL…VSQS and VDPR…NMLV. 16-23 contributes to the ATP binding site; that stretch reads GMIGSGKT. LRR repeat units follow at residues 488–511, 512–534, 536–558, and 560–581; these read SLNS…SKLQ, ALQL…ICEL, RLVY…IGNV, and TLEK…AVSL.

This sequence belongs to the disease resistance NB-LRR family.

In terms of biological role, potential disease resistance protein. This is Putative disease resistance protein At5g47280 from Arabidopsis thaliana (Mouse-ear cress).